The chain runs to 786 residues: Endonuclease MutS2 (786 aa).

Position 333 to 340 (333 to 340 (GPNTGGKT)) interacts with ATP. Residues 711–786 (LDLRGERYDQ…GSGATIVNFK (76 aa)) enclose the Smr domain.

Belongs to the DNA mismatch repair MutS family. MutS2 subfamily. In terms of assembly, homodimer. Binds to stalled ribosomes, contacting rRNA.

In terms of biological role, endonuclease that is involved in the suppression of homologous recombination and thus may have a key role in the control of bacterial genetic diversity. Functionally, acts as a ribosome collision sensor, splitting the ribosome into its 2 subunits. Detects stalled/collided 70S ribosomes which it binds and splits by an ATP-hydrolysis driven conformational change. Acts upstream of the ribosome quality control system (RQC), a ribosome-associated complex that mediates the extraction of incompletely synthesized nascent chains from stalled ribosomes and their subsequent degradation. Probably generates substrates for RQC. This chain is Endonuclease MutS2, found in Lacticaseibacillus paracasei (strain ATCC 334 / BCRC 17002 / CCUG 31169 / CIP 107868 / KCTC 3260 / NRRL B-441) (Lactobacillus paracasei).